The chain runs to 156 residues: Small ribosomal subunit protein uS7 (156 aa).

This sequence belongs to the universal ribosomal protein uS7 family. As to quaternary structure, part of the 30S ribosomal subunit. Contacts proteins S9 and S11.

In terms of biological role, one of the primary rRNA binding proteins, it binds directly to 16S rRNA where it nucleates assembly of the head domain of the 30S subunit. Is located at the subunit interface close to the decoding center, probably blocks exit of the E-site tRNA. In Pseudomonas syringae pv. tomato (strain ATCC BAA-871 / DC3000), this protein is Small ribosomal subunit protein uS7.